Consider the following 214-residue polypeptide: Potassium-transporting ATPase KdpC subunit (214 aa).

A helical membrane pass occupies residues 17–37 (LWVITALIYPFSMIAIGQILF).

This sequence belongs to the KdpC family. The system is composed of three essential subunits: KdpA, KdpB and KdpC.

The protein localises to the cell inner membrane. Its function is as follows. Part of the high-affinity ATP-driven potassium transport (or Kdp) system, which catalyzes the hydrolysis of ATP coupled with the electrogenic transport of potassium into the cytoplasm. This subunit acts as a catalytic chaperone that increases the ATP-binding affinity of the ATP-hydrolyzing subunit KdpB by the formation of a transient KdpB/KdpC/ATP ternary complex. This is Potassium-transporting ATPase KdpC subunit from Microcystis aeruginosa (strain NIES-843 / IAM M-2473).